The primary structure comprises 154 residues: Endoribonuclease YbeY (154 aa).

3 residues coordinate Zn(2+): His-113, His-117, and His-123.

The protein belongs to the endoribonuclease YbeY family. The cofactor is Zn(2+).

It localises to the cytoplasm. Single strand-specific metallo-endoribonuclease involved in late-stage 70S ribosome quality control and in maturation of the 3' terminus of the 16S rRNA. In Vibrio campbellii (strain ATCC BAA-1116), this protein is Endoribonuclease YbeY.